A 245-amino-acid polypeptide reads, in one-letter code: Dof zinc finger protein DOF3.2 (245 aa).

The segment covering 15–26 has biased composition (polar residues); the sequence is SCSTQDYQNQKK. Residues 15–41 form a disordered region; that stretch reads SCSTQDYQNQKKPLSATRPAPPEQSLR. Residues 40-94 form a Dof-type zinc finger; it reads LRCPRCDSTNTKFCYYNNYSLSQPRYFCKSCRRYWTKGGILRNIPIGGAYRKHKR. Zn(2+) is bound by residues cysteine 42, cysteine 45, cysteine 67, and cysteine 70. Residues 91–118 are disordered; that stretch reads KHKRSSSATKSLRTTPEPTMTHDGKSFP. The segment covering 96-108 has biased composition (polar residues); that stretch reads SSATKSLRTTPEP.

As to quaternary structure, interacts with TCP14. In terms of tissue distribution, the PEAR proteins (e.g. DOF2.4, DOF5.1, DOF3.2, DOF1.1, DOF5.6 and DOF5.3) form a short-range concentration gradient that peaks at protophloem sieve elements (PSE).

Its subcellular location is the nucleus. Transcription factor that negatively affects seed germination and opposes TCP14 function in the regulation of a specific set of abscisic acid-related genes. The PEAR proteins (e.g. DOF2.4, DOF5.1, DOF3.2, DOF1.1, DOF5.6 and DOF5.3) activate gene expression that promotes radial growth of protophloem sieve elements. This is Dof zinc finger protein DOF3.2 from Arabidopsis thaliana (Mouse-ear cress).